The following is a 339-amino-acid chain: Serpentine receptor class r-10 (339 aa).

The Extracellular segment spans residues 1 to 11; it reads MSGELWITLVD. The chain crosses the membrane as a helical span at residues 12–32; sequence TADIVGVTLTFCVNIVLLGLL. Residues 33–42 lie on the Cytoplasmic side of the membrane; sequence KTRGKNLGTY. Residues 43–63 traverse the membrane as a helical segment; it reads KYLMAFFSVFSIFYAIIEFIL. The Extracellular segment spans residues 64–92; that stretch reads RPIMHIENTTFFLISRKRFNYSTKLGKIN. Residues Asn-71 and Asn-83 are each glycosylated (N-linked (GlcNAc...) asparagine). The helical transmembrane segment at 93–113 threads the bilayer; it reads SAFYCACFATSFVVSGVHFVY. Residues 114–131 lie on the Cytoplasmic side of the membrane; sequence RYFATCKPNLLRLFNLPT. Residues 132 to 152 traverse the membrane as a helical segment; it reads LLLWPLGCSVPVTMWASVSYF. At 153–201 the chain is on the extracellular side; sequence LYPDTEYTEAAVTNVLNNHYNWIKKENVSYIAYVYYQYENGVRHIYLKN. Asn-179 is a glycosylation site (N-linked (GlcNAc...) asparagine). The helical transmembrane segment at 202–222 threads the bilayer; the sequence is LLGCFVHYFVMSMTFVVMFYC. The Cytoplasmic segment spans residues 223 to 254; that stretch reads GYATWKTMNEHKDVSDRTRALQKQLFKALVLQ. A helical transmembrane segment spans residues 255 to 275; the sequence is TLIPTIFMYAPTGVMFIAPFF. Residues 276 to 284 are Extracellular-facing; sequence DVNLNANAN. Residues 285-305 traverse the membrane as a helical segment; that stretch reads FIVFCSFLYPGLDPLILILII. Residues 306 to 339 lie on the Cytoplasmic side of the membrane; the sequence is RDFRRTIFNFLCGKKNSVDESRSTTRANLSQVPT.

The protein belongs to the nematode receptor-like protein str family. As to quaternary structure, interacts with odr-4. Strongly expressed in the sensory cilia of AWA olfactory neurons, and at low levels in the CEP neurons.

It is found in the cell projection. The protein resides in the cilium membrane. In terms of biological role, an odorant receptor which affects chemotaxis to the volatile odorant diacetyl. Specifies AWA neuronal cell fate via the odr-7 pathway. This Caenorhabditis elegans protein is Serpentine receptor class r-10.